A 218-amino-acid chain; its full sequence is Pyridoxine/pyridoxamine 5'-phosphate oxidase (218 aa).

Substrate contacts are provided by residues 14–17 and Lys72; that span reads RREY. FMN is bound by residues 67–72, 82–83, Arg88, Lys89, and Gln111; these read RIVLLK and YT. Residues Tyr129, Arg133, and Ser137 each contribute to the substrate site. FMN-binding positions include 146–147 and Trp191; that span reads QS. 197–199 is a binding site for substrate; it reads RLH. Arg201 serves as a coordination point for FMN.

Belongs to the pyridoxamine 5'-phosphate oxidase family. As to quaternary structure, homodimer. FMN is required as a cofactor.

It carries out the reaction pyridoxamine 5'-phosphate + O2 + H2O = pyridoxal 5'-phosphate + H2O2 + NH4(+). It catalyses the reaction pyridoxine 5'-phosphate + O2 = pyridoxal 5'-phosphate + H2O2. The protein operates within cofactor metabolism; pyridoxal 5'-phosphate salvage; pyridoxal 5'-phosphate from pyridoxamine 5'-phosphate: step 1/1. It functions in the pathway cofactor metabolism; pyridoxal 5'-phosphate salvage; pyridoxal 5'-phosphate from pyridoxine 5'-phosphate: step 1/1. In terms of biological role, catalyzes the oxidation of either pyridoxine 5'-phosphate (PNP) or pyridoxamine 5'-phosphate (PMP) into pyridoxal 5'-phosphate (PLP). This Escherichia coli (strain 55989 / EAEC) protein is Pyridoxine/pyridoxamine 5'-phosphate oxidase.